The sequence spans 31 residues: Cycloviolacin-O14 (31 aa).

Positions 1–31 (GSIPACGESCFKGKCYTPGCSCSKYPLCAKN) form a cross-link, cyclopeptide (Gly-Asn). Intrachain disulfides connect Cys-6–Cys-20, Cys-10–Cys-22, and Cys-15–Cys-28.

This is a cyclic peptide. As to expression, expressed in leaves and petioles but not in petals, roots and runners (at protein level).

Probably participates in a plant defense mechanism. Has hemolytic activity. The polypeptide is Cycloviolacin-O14 (Viola odorata (Sweet violet)).